Reading from the N-terminus, the 349-residue chain is Nicotinate-nucleotide--dimethylbenzimidazole phosphoribosyltransferase (349 aa).

Glu318 acts as the Proton acceptor in catalysis.

The protein belongs to the CobT family.

The enzyme catalyses 5,6-dimethylbenzimidazole + nicotinate beta-D-ribonucleotide = alpha-ribazole 5'-phosphate + nicotinate + H(+). The protein operates within nucleoside biosynthesis; alpha-ribazole biosynthesis; alpha-ribazole from 5,6-dimethylbenzimidazole: step 1/2. In terms of biological role, catalyzes the synthesis of alpha-ribazole-5'-phosphate from nicotinate mononucleotide (NAMN) and 5,6-dimethylbenzimidazole (DMB). The sequence is that of Nicotinate-nucleotide--dimethylbenzimidazole phosphoribosyltransferase from Alkaliphilus metalliredigens (strain QYMF).